A 322-amino-acid polypeptide reads, in one-letter code: Ferredoxin--NADP reductase (322 aa).

Asp34, Gln42, Tyr47, Val87, Phe120, Asp279, and Thr320 together coordinate FAD.

It belongs to the ferredoxin--NADP reductase type 2 family. Homodimer. FAD is required as a cofactor.

The catalysed reaction is 2 reduced [2Fe-2S]-[ferredoxin] + NADP(+) + H(+) = 2 oxidized [2Fe-2S]-[ferredoxin] + NADPH. The sequence is that of Ferredoxin--NADP reductase from Streptococcus pneumoniae serotype 19F (strain G54).